The chain runs to 173 residues: Galactose-6-phosphate isomerase subunit LacB (173 aa).

The protein belongs to the LacAB/RpiB family. As to quaternary structure, heteromultimeric protein consisting of LacA and LacB.

The catalysed reaction is aldehydo-D-galactose 6-phosphate = keto-D-tagatose 6-phosphate. The protein operates within carbohydrate metabolism; D-galactose 6-phosphate degradation; D-tagatose 6-phosphate from D-galactose 6-phosphate: step 1/1. In Clostridium acetobutylicum (strain ATCC 824 / DSM 792 / JCM 1419 / IAM 19013 / LMG 5710 / NBRC 13948 / NRRL B-527 / VKM B-1787 / 2291 / W), this protein is Galactose-6-phosphate isomerase subunit LacB.